The primary structure comprises 346 residues: N-acetyl-gamma-glutamyl-phosphate reductase (346 aa).

C150 is a catalytic residue.

The protein belongs to the NAGSA dehydrogenase family. Type 1 subfamily.

The protein resides in the cytoplasm. The catalysed reaction is N-acetyl-L-glutamate 5-semialdehyde + phosphate + NADP(+) = N-acetyl-L-glutamyl 5-phosphate + NADPH + H(+). The protein operates within amino-acid biosynthesis; L-arginine biosynthesis; N(2)-acetyl-L-ornithine from L-glutamate: step 3/4. Functionally, catalyzes the NADPH-dependent reduction of N-acetyl-5-glutamyl phosphate to yield N-acetyl-L-glutamate 5-semialdehyde. The sequence is that of N-acetyl-gamma-glutamyl-phosphate reductase from Alkaliphilus metalliredigens (strain QYMF).